Reading from the N-terminus, the 184-residue chain is Gastrokine-2 (184 aa).

The signal sequence occupies residues 1–20; sequence MKSLVAFLVVLSILRIQSQA. The BRICHOS domain maps to 54 to 151; the sequence is HSGSCSSTTI…LCKHIPLYEG (98 aa). A disulfide bridge connects residues Cys-81 and Cys-143.

Heterodimer with TFF1; disulfide linked. Interacts with TFF2.

Its subcellular location is the secreted. This Rattus norvegicus (Rat) protein is Gastrokine-2 (Gkn2).